The following is a 435-amino-acid chain: Histidinol dehydrogenase (435 aa).

3 residues coordinate NAD(+): Tyr131, Gln189, and Asn212. Residues Ser238, Gln260, and His263 each contribute to the substrate site. Zn(2+)-binding residues include Gln260 and His263. Catalysis depends on proton acceptor residues Glu327 and His328. His328, Asp361, Glu415, and His420 together coordinate substrate. Residue Asp361 coordinates Zn(2+). Position 420 (His420) interacts with Zn(2+).

This sequence belongs to the histidinol dehydrogenase family. In terms of assembly, homodimer. It depends on Zn(2+) as a cofactor.

The catalysed reaction is L-histidinol + 2 NAD(+) + H2O = L-histidine + 2 NADH + 3 H(+). Its pathway is amino-acid biosynthesis; L-histidine biosynthesis; L-histidine from 5-phospho-alpha-D-ribose 1-diphosphate: step 9/9. In terms of biological role, catalyzes the sequential NAD-dependent oxidations of L-histidinol to L-histidinaldehyde and then to L-histidine. This is Histidinol dehydrogenase (hisD) from Buchnera aphidicola subsp. Schizaphis graminum (strain Sg).